The following is a 907-amino-acid chain: DNA (cytosine-5)-methyltransferase CMT3 (907 aa).

Residues 1-15 (MAPSSPSSAAAPTRT) show a composition bias toward low complexity. Positions 1–154 (MAPSSPSSAA…RNAATRRPDE (154 aa)) are disordered. A compositionally biased stretch (basic and acidic residues) spans 30–63 (ATDEPSTKRTRRPKAETKPRKKKDEVKEEEKPPM). Residues 64–89 (EDDACGEEPDAEEMALGEEAEAEEAE) show a composition bias toward acidic residues. Basic and acidic residues-rich tracts occupy residues 115–124 (HGSDGDHDPE) and 131–140 (PAKEARDKWP). In terms of domain architecture, BAH spans 172-297 (TLYCLHDDVY…VAYSTFANIP (126 aa)). The tract at residues 303-323 (SGSDTASDISSDDVDSSKGKV) is disordered. Residues 335–868 (ATLLDLYSGC…YSLGLAYQRE (534 aa)) form the SAM-dependent MTase C5-type domain. Residues 437–500 (FVVEKLAGIC…EGYRRKILPL (64 aa)) enclose the Chromo domain. C513 is an active-site residue.

Belongs to the class I-like SAM-binding methyltransferase superfamily. C5-methyltransferase family.

It localises to the nucleus. It catalyses the reaction a 2'-deoxycytidine in DNA + S-adenosyl-L-methionine = a 5-methyl-2'-deoxycytidine in DNA + S-adenosyl-L-homocysteine + H(+). Its function is as follows. Involved in CpXpG DNA methylation. Plays a critical role in the maintenance of CpXpG DNA methylation and suppression of a wide spectrum of transposable element (TE) activities. Required for proper plant development in reproductive stage. The sequence is that of DNA (cytosine-5)-methyltransferase CMT3 from Oryza sativa subsp. japonica (Rice).